Reading from the N-terminus, the 512-residue chain is Tabersonine 16-hydroxylase 2 (512 aa).

Met-1 is a topological domain (lumenal). Residues 2–22 traverse the membrane as a helical segment; the sequence is ELYYFSTFAFLLFCFILAKTL. Residues 23–512 are Cytoplasmic-facing; that stretch reads KKSGQSNLKL…YSASSLKGKY (490 aa). Cys-445 provides a ligand contact to heme.

The protein belongs to the cytochrome P450 family. Heme is required as a cofactor. In terms of tissue distribution, expressed at low levels in roots, fruits, stems, flower buds and flowers, but highly expressed in young leaves. Detected in adaxial and abaxial epidermis cells.

The protein localises to the endoplasmic reticulum membrane. It carries out the reaction (-)-tabersonine + reduced [NADPH--hemoprotein reductase] + O2 = 16-hydroxytabersonine + oxidized [NADPH--hemoprotein reductase] + H2O + H(+). In terms of biological role, involved in the foliar biosynthesis of vindoline, a precursor of vinblastine and vincristine. Hydroxylates specifically tabersonine, 2,3-dihydrotabersonine and 2,3-dihydro-3-hydroxytabersonine, but has no activity with naringenin, tryptamine, secologanin, strictosidine, ajmalicine, vindoline and catharanthine. The chain is Tabersonine 16-hydroxylase 2 from Catharanthus roseus (Madagascar periwinkle).